Here is a 63-residue protein sequence, read N- to C-terminus: Conotoxin PnMRCL-0111 (63 aa).

Positions 1 to 22 (MHCLSVFVILLLLTASAPSVDA) are cleaved as a signal peptide. A propeptide spanning residues 23-50 (QPKTEDDVPLSSFHDDLQRTVRTLLDIR) is cleaved from the precursor. At W62 the chain carries Tryptophan amide.

This sequence belongs to the conotoxin T superfamily. In terms of processing, contains 2 disulfide bonds that can be either 'C1-C3, C2-C4' or 'C1-C4, C2-C3', since these disulfide connectivities have been observed for conotoxins with cysteine framework V (for examples, see AC P0DQQ7 and AC P81755). As to expression, expressed by the venom duct.

It localises to the secreted. The chain is Conotoxin PnMRCL-0111 from Conus pennaceus (Feathered cone).